A 297-amino-acid polypeptide reads, in one-letter code: tRNA uridine(34) hydroxylase (297 aa).

One can recognise a Rhodanese domain in the interval 137 to 232 (RGDDVVFFDG…YGEKYGDKGL (96 aa)). Cys192 (cysteine persulfide intermediate) is an active-site residue.

This sequence belongs to the TrhO family.

The enzyme catalyses uridine(34) in tRNA + AH2 + O2 = 5-hydroxyuridine(34) in tRNA + A + H2O. In terms of biological role, catalyzes oxygen-dependent 5-hydroxyuridine (ho5U) modification at position 34 in tRNAs. The polypeptide is tRNA uridine(34) hydroxylase (Corynebacterium urealyticum (strain ATCC 43042 / DSM 7109)).